The following is a 224-amino-acid chain: Orotate phosphoribosyltransferase (224 aa).

Residue Lys-29 participates in 5-phospho-alpha-D-ribose 1-diphosphate binding. 37 to 38 is an orotate binding site; sequence FF. 5-phospho-alpha-D-ribose 1-diphosphate-binding positions include 75-76, Arg-105, Lys-106, Lys-109, His-111, and 130-138; these read YK and DDVITAGTS. Orotate contacts are provided by Thr-134 and Arg-162.

The protein belongs to the purine/pyrimidine phosphoribosyltransferase family. PyrE subfamily. In terms of assembly, homodimer. Requires Mg(2+) as cofactor.

The catalysed reaction is orotidine 5'-phosphate + diphosphate = orotate + 5-phospho-alpha-D-ribose 1-diphosphate. It functions in the pathway pyrimidine metabolism; UMP biosynthesis via de novo pathway; UMP from orotate: step 1/2. Its function is as follows. Catalyzes the transfer of a ribosyl phosphate group from 5-phosphoribose 1-diphosphate to orotate, leading to the formation of orotidine monophosphate (OMP). The polypeptide is Orotate phosphoribosyltransferase (Bordetella parapertussis (strain 12822 / ATCC BAA-587 / NCTC 13253)).